The primary structure comprises 96 residues: Putative pterin-4-alpha-carbinolamine dehydratase (96 aa).

The protein belongs to the pterin-4-alpha-carbinolamine dehydratase family.

It carries out the reaction (4aS,6R)-4a-hydroxy-L-erythro-5,6,7,8-tetrahydrobiopterin = (6R)-L-erythro-6,7-dihydrobiopterin + H2O. The polypeptide is Putative pterin-4-alpha-carbinolamine dehydratase (Prochlorococcus marinus (strain MIT 9301)).